Consider the following 307-residue polypeptide: Mediator of RNA polymerase II transcription subunit 18 (307 aa).

The span at 117–126 shows a compositional bias: polar residues; it reads TNFNSTNEDQ. The tract at residues 117-162 is disordered; that stretch reads TNFNSTNEDQNNSKHTEDTVNESRNSDDIIDVDMDASPAPSNESCS.

This sequence belongs to the Mediator complex subunit 18 family. In terms of assembly, component of the Mediator complex, which is composed of at least 21 subunits that form three structurally distinct submodules. The Mediator head module contains MED6, MED8, MED11, SRB4/MED17, SRB5/MED18, ROX3/MED19, SRB2/MED20 and SRB6/MED22, the middle module contains MED1, MED4, NUT1/MED5, MED7, CSE2/MED9, NUT2/MED10, SRB7/MED21 and SOH1/MED31, and the tail module contains MED2, PGD1/MED3, RGR1/MED14, GAL11/MED15 and SIN4/MED16. The head and the middle modules interact directly with RNA polymerase II, whereas the elongated tail module interacts with gene-specific regulatory proteins. SRB5/MED18 interacts directly with MED8 and SRB2/MED20.

It is found in the nucleus. Its function is as follows. Component of the Mediator complex, a coactivator involved in the regulated transcription of nearly all RNA polymerase II-dependent genes. Mediator functions as a bridge to convey information from gene-specific regulatory proteins to the basal RNA polymerase II transcription machinery. The Mediator complex, having a compact conformation in its free form, is recruited to promoters by direct interactions with regulatory proteins and serves for the assembly of a functional preinitiation complex with RNA polymerase II and the general transcription factors. The Mediator complex unfolds to an extended conformation and partially surrounds RNA polymerase II, specifically interacting with the unphosphorylated form of the C-terminal domain (CTD) of RNA polymerase II. The Mediator complex dissociates from the RNA polymerase II holoenzyme and stays at the promoter when transcriptional elongation begins. The polypeptide is Mediator of RNA polymerase II transcription subunit 18 (SRB5) (Saccharomyces cerevisiae (strain ATCC 204508 / S288c) (Baker's yeast)).